Reading from the N-terminus, the 127-residue chain is Apolipoprotein C-IV (127 aa).

An N-terminal signal peptide occupies residues 1 to 27 (MSLLRNRLQALPALCLCVLVLACIGAC). N-linked (GlcNAc...) asparagine glycosylation occurs at Asn-63.

It belongs to the apolipoprotein C4 family. Expressed by the liver and secreted in plasma.

It is found in the secreted. In terms of biological role, may participate in lipoprotein metabolism. This Homo sapiens (Human) protein is Apolipoprotein C-IV (APOC4).